Consider the following 406-residue polypeptide: Probable transcription factor FPSE_09188 (406 aa).

The interval Met1–Gly72 is disordered. Over residues Ala7–Ser20 the composition is skewed to low complexity.

Belongs to the bZIP family.

It localises to the nucleus. In terms of biological role, the two putative transcription factors FPSE_09188 and FPSE_09189 could be responsible for orchestrating expression of the W493 A and B biosynthesis cluster genes. W493 A and B consist of six amino acid residues D-allo-thr, L-Ala, D-Ala, L-Gln, D-Tyr, and L-Val/L-Ile linked to a 3-hydroxy-4-methyltetradecanoic acid polyketide chain. The protein is Probable transcription factor FPSE_09188 of Fusarium pseudograminearum (strain CS3096) (Wheat and barley crown-rot fungus).